A 134-amino-acid polypeptide reads, in one-letter code: Protein OPG030 (134 aa).

In terms of domain architecture, BACK spans 88 to 133; sequence YKENGLRNSFLRQYINNNIEEIRNTDQFLKFDVDSVCDILNNDETI.

This sequence belongs to the orthopoxvirus OPG030 family.

In Variola virus (isolate Human/India/Ind3/1967) (VARV), this protein is Protein OPG030 (OPG30).